Consider the following 421-residue polypeptide: Galactooligosaccharide-binding protein (421 aa).

Positions 1–22 (MKMAKKCSVFMLCAAVSLSLAA) are cleaved as a signal peptide. Cys-23 is lipidated: N-palmitoyl cysteine. A lipid anchor (S-diacylglycerol cysteine) is attached at Cys-23. A disordered region spans residues 393 to 421 (ATGKADPKQALDQAAETAKGQIKAKHSGK).

Belongs to the bacterial solute-binding protein 1 family. The complex is composed of two ATP-binding proteins (MsmX), two transmembrane proteins (GanP and GanQ) and a solute-binding protein (GanS).

It is found in the cell membrane. In terms of biological role, involved in galactan degradation. Part of the ABC transporter complex GanPQS involved in the uptake of galactooligosaccharides. Binds mainly galactotetraose and galactotriose. The sequence is that of Galactooligosaccharide-binding protein from Bacillus subtilis (strain 168).